The chain runs to 594 residues: Aspartate--tRNA ligase (594 aa).

Glu-171 is a binding site for L-aspartate. The aspartate stretch occupies residues 195–198 (QLFK). Arg-217 provides a ligand contact to L-aspartate. ATP is bound by residues 217 to 219 (RDE) and Gln-226. His-449 contributes to the L-aspartate binding site. Glu-483 is a binding site for ATP. L-aspartate is bound at residue Arg-490. An ATP-binding site is contributed by 535 to 538 (GLDR).

The protein belongs to the class-II aminoacyl-tRNA synthetase family. Type 1 subfamily. As to quaternary structure, homodimer.

Its subcellular location is the cytoplasm. It carries out the reaction tRNA(Asp) + L-aspartate + ATP = L-aspartyl-tRNA(Asp) + AMP + diphosphate. Functionally, catalyzes the attachment of L-aspartate to tRNA(Asp) in a two-step reaction: L-aspartate is first activated by ATP to form Asp-AMP and then transferred to the acceptor end of tRNA(Asp). The protein is Aspartate--tRNA ligase of Proteus mirabilis (strain HI4320).